We begin with the raw amino-acid sequence, 101 residues long: Urease subunit beta (101 aa).

It belongs to the urease beta subunit family. In terms of assembly, heterotrimer of UreA (gamma), UreB (beta) and UreC (alpha) subunits. Three heterotrimers associate to form the active enzyme.

Its subcellular location is the cytoplasm. The enzyme catalyses urea + 2 H2O + H(+) = hydrogencarbonate + 2 NH4(+). It participates in nitrogen metabolism; urea degradation; CO(2) and NH(3) from urea (urease route): step 1/1. The sequence is that of Urease subunit beta from Sinorhizobium medicae (strain WSM419) (Ensifer medicae).